The chain runs to 404 residues: Probable mannosyltransferase KTR3 (404 aa).

Topologically, residues 1–27 are cytoplasmic; it reads MSVHHKKKLMPKSALLIRKYQKGIRSS. Residues 28-44 traverse the membrane as a helical; Signal-anchor for type II membrane protein segment; it reads FIGLIIVLSFLFFMSGS. A stem region region spans residues 45–83; the sequence is RSPEVPIAQGTSVSRVASKDYLMPFTDKSQGVIHPVDDG. Residues 45–404 lie on the Lumenal side of the membrane; that stretch reads RSPEVPIAQG…AGNYKLPPGI (360 aa). Positions 84–404 are catalytic; it reads KKEKGVMVTL…AGNYKLPPGI (321 aa). Residue Glu295 is the Nucleophile of the active site.

The protein belongs to the glycosyltransferase 15 family. In terms of assembly, interacts with SVP26.

The protein localises to the membrane. Possible glycosyltransferase that transfers an alpha-D-mannosyl residue from GDP-mannose into lipid-linked oligosaccharide, forming an alpha-(1-&gt;2)-D-mannosyl-D-mannose linkage. This chain is Probable mannosyltransferase KTR3 (KTR3), found in Saccharomyces cerevisiae (strain ATCC 204508 / S288c) (Baker's yeast).